The following is a 919-amino-acid chain: Transcriptional regulatory protein EDS1 (919 aa).

A disordered region spans residues 1–54; that stretch reads MSHHVPNLYGTPIRDPHERKRNSASMGEVNQSVSSRNCERGSEKGTKQRKKASH. Positions 23–36 are enriched in polar residues; it reads SASMGEVNQSVSSR. Residues 37–46 are compositionally biased toward basic and acidic residues; that stretch reads NCERGSEKGT. Residues 56–85 constitute a DNA-binding region (zn(2)-C6 fungal-type); sequence CDQCRRKRIKCRFDKHTGVCQGCLEVGEKC. The segment at 297 to 338 is disordered; the sequence is AGFPNKKLGTDGRSDKWDKNSTWKPVYRSSNPSHPSTEKNVS. A compositionally biased stretch (basic and acidic residues) spans 304–317; it reads LGTDGRSDKWDKNS. The segment covering 318–338 has biased composition (polar residues); sequence TWKPVYRSSNPSHPSTEKNVS.

The protein belongs to the EDS1/RGT1 family. Binds DNA in a sequence-specific manner.

It is found in the nucleus. The chain is Transcriptional regulatory protein EDS1 (EDS1) from Saccharomyces cerevisiae (strain ATCC 204508 / S288c) (Baker's yeast).